The primary structure comprises 153 residues: Large ribosomal subunit protein bL9 (153 aa).

Belongs to the bacterial ribosomal protein bL9 family.

In terms of biological role, binds to the 23S rRNA. In Gloeobacter violaceus (strain ATCC 29082 / PCC 7421), this protein is Large ribosomal subunit protein bL9.